The chain runs to 424 residues: MKLVLFLVLLFSALINLTNADKMVVAHFIVGNTYPYTVSNWEEDIQDAIAVGIDGFALNMGSDAWQVERIEDAYDAAASVSSDFKLFISFDMSIISADADFIEGVVRRFADKPNQLYYDGKVFVSTFAGETDTFGYSDVSTGWDSAVKEPLASAGYPIYFVPSWTSLGQGALEESVADGFLSWNAWPTTDADMNDNDDIGYQNLANSLGKLYVAPVSPWFYTHLSYKNWAYKSDWLIIDRWNEMLSVQPDMIEVLTWNDYGESHYIGNIQGALPAGSEGYVDGFDHTAWRYLMSPYISAYKLGLSEPYINFESLFYWYRPTPKSATATADSLSYPSGGDYMEDEIFVLVYLLQSAEVTVTCGSTTQTFSGVPGVNQFTIPMETNASPSFTVARQGGTLASGTGPEIVDSLSIYNFNAYTGVLYF.

A signal peptide spans 1–20 (MKLVLFLVLLFSALINLTNA).

This sequence belongs to the glycosyl hydrolase 71 family. In terms of assembly, monomer. In terms of processing, not glycosylated.

The protein localises to the secreted. Its subcellular location is the cell wall. It catalyses the reaction Endohydrolysis of (1-&gt;3)-alpha-D-glucosidic linkages in isolichenin, pseudonigeran and nigeran.. Its function is as follows. Has a role in cell separation where it is required for the degradation of the cell wall material surrounding the septum (the septum edging) which must be hydrolyzed before full separation of the daughter cells can occur. Hydrolyzes 1,3-alpha-glucan predominantly into pentasaccharides. This Schizosaccharomyces pombe (strain 972 / ATCC 24843) (Fission yeast) protein is Glucan endo-1,3-alpha-glucosidase agn1 (agn1).